The following is a 259-amino-acid chain: Undecaprenyl-diphosphatase 4 (259 aa).

8 consecutive transmembrane segments (helical) span residues 1–21 (MNWLEAFILGIIQGLTEFLPI), 39–59 (AGLFLDTMLHIGTLLAVFIYY), 71–91 (FSKLMLLLIVGTIPAVVIGLL), 99–119 (ISKTGITIGWEFLVTGFFLYM), 133–153 (ITYKDAFIIGSFQAAAIFPAI), 174–194 (AYFSFLLSTPAIVGAIILQFV), 208–228 (SLIVGTLSAAFFGYIAVSWMI), and 239–259 (FAYYVWGLGILILTLQFTDVF).

It belongs to the UppP family.

The protein localises to the cell membrane. The catalysed reaction is di-trans,octa-cis-undecaprenyl diphosphate + H2O = di-trans,octa-cis-undecaprenyl phosphate + phosphate + H(+). Functionally, catalyzes the dephosphorylation of undecaprenyl diphosphate (UPP). Confers resistance to bacitracin. The chain is Undecaprenyl-diphosphatase 4 from Bacillus cereus (strain ZK / E33L).